The primary structure comprises 389 residues: Formate-dependent phosphoribosylglycinamide formyltransferase (389 aa).

N(1)-(5-phospho-beta-D-ribosyl)glycinamide-binding positions include 12–13 and E72; that span reads EL. Residues R104, K145, 150 to 155, 185 to 188, and E193 each bind ATP; these read SSGKGQ and EAFV. Residues 109–300 enclose the ATP-grasp domain; it reads DLASKELGLR…EFELHARAVL (192 aa). 2 residues coordinate Mg(2+): E258 and E270. N(1)-(5-phospho-beta-D-ribosyl)glycinamide contacts are provided by residues D277, K348, and 355 to 356; that span reads RR.

Belongs to the PurK/PurT family. Homodimer.

The catalysed reaction is N(1)-(5-phospho-beta-D-ribosyl)glycinamide + formate + ATP = N(2)-formyl-N(1)-(5-phospho-beta-D-ribosyl)glycinamide + ADP + phosphate + H(+). Its pathway is purine metabolism; IMP biosynthesis via de novo pathway; N(2)-formyl-N(1)-(5-phospho-D-ribosyl)glycinamide from N(1)-(5-phospho-D-ribosyl)glycinamide (formate route): step 1/1. In terms of biological role, involved in the de novo purine biosynthesis. Catalyzes the transfer of formate to 5-phospho-ribosyl-glycinamide (GAR), producing 5-phospho-ribosyl-N-formylglycinamide (FGAR). Formate is provided by PurU via hydrolysis of 10-formyl-tetrahydrofolate. This is Formate-dependent phosphoribosylglycinamide formyltransferase from Chlorobium phaeobacteroides (strain DSM 266 / SMG 266 / 2430).